We begin with the raw amino-acid sequence, 346 residues long: Elongation factor Ts (346 aa).

An involved in Mg(2+) ion dislocation from EF-Tu region spans residues T80 to V83.

This sequence belongs to the EF-Ts family.

It localises to the cytoplasm. Its function is as follows. Associates with the EF-Tu.GDP complex and induces the exchange of GDP to GTP. It remains bound to the aminoacyl-tRNA.EF-Tu.GTP complex up to the GTP hydrolysis stage on the ribosome. This Streptococcus pneumoniae (strain 70585) protein is Elongation factor Ts.